The sequence spans 363 residues: Biotin synthase (363 aa).

The Radical SAM core domain occupies 40-268 (NVVQVSTLLS…ETQVRLSAGR (229 aa)). Residues C55, C59, and C62 each contribute to the [4Fe-4S] cluster site. C99, C131, C191, and R263 together coordinate [2Fe-2S] cluster.

It belongs to the radical SAM superfamily. Biotin synthase family. As to quaternary structure, homodimer. [4Fe-4S] cluster is required as a cofactor. Requires [2Fe-2S] cluster as cofactor.

The catalysed reaction is (4R,5S)-dethiobiotin + (sulfur carrier)-SH + 2 reduced [2Fe-2S]-[ferredoxin] + 2 S-adenosyl-L-methionine = (sulfur carrier)-H + biotin + 2 5'-deoxyadenosine + 2 L-methionine + 2 oxidized [2Fe-2S]-[ferredoxin]. It participates in cofactor biosynthesis; biotin biosynthesis; biotin from 7,8-diaminononanoate: step 2/2. Its function is as follows. Catalyzes the conversion of dethiobiotin (DTB) to biotin by the insertion of a sulfur atom into dethiobiotin via a radical-based mechanism. This Flavobacterium johnsoniae (strain ATCC 17061 / DSM 2064 / JCM 8514 / BCRC 14874 / CCUG 350202 / NBRC 14942 / NCIMB 11054 / UW101) (Cytophaga johnsonae) protein is Biotin synthase.